Consider the following 150-residue polypeptide: MTNIKENYKSKVKTYQPKPPYVWNCVKAFLVGGLICAIGQGLQNFYIHFFDFNEKTAGNPTAATLILISALLTGFGIYDRIGQFAGAGSAVPVTGFANSMASAALEYKSEGLVLGVATNMFKLAGNVIVFGVVAAYIVGMIRFAFEKLMS.

4 consecutive transmembrane segments (helical) span residues 30-50, 57-77, 84-104, and 121-141; these read LVGGLICAIGQGLQNFYIHFF, AGNPTAATLILISALLTGFGI, FAGAGSAVPVTGFANSMASAA, and FKLAGNVIVFGVVAAYIVGMI.

The protein resides in the cell membrane. The polypeptide is Stage V sporulation protein AC (spoVAC) (Bacillus subtilis (strain 168)).